Consider the following 401-residue polypeptide: MGFITKAIPLALAAASVINGAEILETRAGVQTLADKYIVVMNDGMSDKDFDSHRSWVNRTHRRRLIRRGAKAMGGMKYTYNFPTGLKGYSGHFDEQMIKEISKRADVKYIERDARVQINAIEQQDNVPSWGLARVGSREPGGTTYYYDSTAGEGTTAYIIDTGTDIQHEEFDGGRATWGENFVDDMDMDCNGHGTHVSGTVGGRTFGVAKKSNIVAVKVLDCNGSGSNSGVIMGMQWATEDAQSKGADKAVVNMSLGGAFSQTSNDAAKAIAEGGVFLAVAAGNDNVDAAEASPASEPSICTVAASTEQDGKADFSNFGQVVDVYAPGDGITSAKPGGGSQVLSGTSMASPHVAGLAAYLIGLGKGGGPQLCDTIKQMAIDVIQNPGSSTTSKLINNGSGM.

A signal peptide spans 1 to 20 (MGFITKAIPLALAAASVING). The propeptide occupies 21 to 119 (AEILETRAGV…IERDARVQIN (99 aa)). In terms of domain architecture, Inhibitor I9 spans 36–118 (KYIVVMNDGM…YIERDARVQI (83 aa)). Asn-58 carries an N-linked (GlcNAc...) asparagine glycan. The 273-residue stretch at 129-401 (SWGLARVGSR…SKLINNGSGM (273 aa)) folds into the Peptidase S8 domain. Active-site charge relay system residues include Asp-161 and His-193. 2 N-linked (GlcNAc...) asparagine glycosylation sites follow: Asn-223 and Asn-253. Ser-347 serves as the catalytic Charge relay system. Asn-397 carries N-linked (GlcNAc...) asparagine glycosylation.

It belongs to the peptidase S8 family.

It localises to the secreted. In terms of biological role, secreted subtilisin-like serine protease with keratinolytic activity that contributes to pathogenicity. This chain is Subtilisin-like protease 7 (SUB7), found in Trichophyton tonsurans (Scalp ringworm fungus).